Here is a 496-residue protein sequence, read N- to C-terminus: MRINPTTSGPMISTLEEKNLGRIVQIIGPVLDALFPPGKMPNIYNALVVKGRAGQQINVTCEVQQLLGNNRVRAVAMSATDGLMRGMEVIDTGAPLSVPVGGATLGRIFNVLGEPVDNLGPVDTRTTSPIHRSAPAFIQLDTKLSIFETGIKVVDLLAPYRRGGKIGLFGGAGVGKTVLIMELINNIAKAHGGVSVFGGVGERTREGNDLYIEMKESGVINEKNIAESKVALVYGQMNEPPGARMRVGLTALTMAEYFRDVNEQDVLLFIDNIFRFVQAGSEVSALLGRMPSAVGYQPTLSTEMGSLQERITSTKEGSITSIQAVYVPADDLTDPAPATTFAHLDATTVLSRGLAAKGIYPAVDPLDSTSTMLQPGIVGEEHYETAQKVKQTSQRYKELQDIIAILGLDELSEEDRLTVARARKIERFLSQPFFVAEVFTGSPGKYVGLAETIRGFQLILSGELDSLPEQAFYLVGNIDEATAKAMNLEVENKLKK.

Residue G170 to T177 coordinates ATP.

The protein belongs to the ATPase alpha/beta chains family. In terms of assembly, F-type ATPases have 2 components, CF(1) - the catalytic core - and CF(0) - the membrane proton channel. CF(1) has five subunits: alpha(3), beta(3), gamma(1), delta(1), epsilon(1). CF(0) has four main subunits: a(1), b(1), b'(1) and c(9-12).

It localises to the plastid. The protein resides in the chloroplast thylakoid membrane. It catalyses the reaction ATP + H2O + 4 H(+)(in) = ADP + phosphate + 5 H(+)(out). In terms of biological role, produces ATP from ADP in the presence of a proton gradient across the membrane. The catalytic sites are hosted primarily by the beta subunits. The sequence is that of ATP synthase subunit beta, chloroplastic from Dioscorea elephantipes (Elephant's foot yam).